We begin with the raw amino-acid sequence, 112 residues long: Putative pterin-4-alpha-carbinolamine dehydratase (112 aa).

This sequence belongs to the pterin-4-alpha-carbinolamine dehydratase family.

The catalysed reaction is (4aS,6R)-4a-hydroxy-L-erythro-5,6,7,8-tetrahydrobiopterin = (6R)-L-erythro-6,7-dihydrobiopterin + H2O. This is Putative pterin-4-alpha-carbinolamine dehydratase from Shewanella baltica (strain OS223).